We begin with the raw amino-acid sequence, 209 residues long: MSGSSERELAAIVRDLGCGPYFLGTHDKRFPGFLAGDKLACAIVNTAGRETGGVHWLAFGWNPRSRTCYMFDPFGFSDRRLKQIYSFEYEAMLRRSALASSPDRCLSLEQSTQTVQGPDSAACGLFCCMFLHAFVHWPDRPMDGNPTMNLLTGVPNGMLQSPQVLPTLRRNQEELYRFLARHSPYFRSHRAAIEHATAFDKMKQLRVSQ.

Catalysis depends on residues His-55, Asp-72, and Cys-123.

It belongs to the peptidase C5 family. In terms of assembly, interacts with protease cofactor pVI-C; this interaction is necessary for protease activation.

Its subcellular location is the virion. The protein resides in the host nucleus. It carries out the reaction Cleaves proteins of the adenovirus and its host cell at two consensus sites: -Yaa-Xaa-Gly-Gly-|-Xaa- and -Yaa-Xaa-Gly-Xaa-|-Gly- (in which Yaa is Met, Ile or Leu, and Xaa is any amino acid).. Its activity is regulated as follows. Requires DNA and protease cofactor for maximal activation. Inside nascent virions, becomes partially activated by binding to the viral DNA, allowing it to cleave the cofactor that binds to the protease and fully activates it. Actin, like the viral protease cofactor, seems to act as a cofactor in the cleavage of cytokeratin 18 and of actin itself. Functionally, cleaves viral precursor proteins (pTP, pIIIa, pVI, pVII, pVIII, and pX) inside newly assembled particles giving rise to mature virions. Protease complexed to its cofactor slides along the viral DNA to specifically locate and cleave the viral precursors. Mature virions have a weakened organization compared to the unmature virions, thereby facilitating subsequent uncoating. Without maturation, the particle lacks infectivity and is unable to uncoat. Late in adenovirus infection, in the cytoplasm, may participate in the cytoskeleton destruction. Cleaves host cell cytoskeletal keratins K7 and K18. The polypeptide is Protease (Human adenovirus D serotype 9 (HAdV-9)).